The primary structure comprises 248 residues: MEIKLQGKVSLVTGSTRGIGRAIAEKLASAGSTVIITGTSGERAKAVAEEIANKYGVKAHGVEMNLLSEESINKAFEEIYNLVDGIDILVNNAGITRDKLFLRMSLLDWEEVLKVNLTGTFLVTQNSLRKMIKQRWGRIVNISSVVGFTGNVGQVNYSTTKAGLIGFTKSLAKELAPRNVLVNAVAPGFIETDMTAVLSEEIKQKYKEQIPLGRFGSPEEVANVVLFLCSELASYITGEVIHVNGGMF.

NADP(+) is bound by residues 14 to 17, T39, 65 to 66, and N92; these read GSTR and NL. S144 contacts substrate. Y157 serves as the catalytic Proton acceptor. NADP(+) contacts are provided by residues 157–161 and I190; that span reads YSTTK.

Belongs to the short-chain dehydrogenases/reductases (SDR) family. In terms of assembly, homotetramer.

It carries out the reaction a (3R)-hydroxyacyl-[ACP] + NADP(+) = a 3-oxoacyl-[ACP] + NADPH + H(+). It functions in the pathway lipid metabolism; fatty acid biosynthesis. Functionally, catalyzes the NADPH-dependent reduction of beta-ketoacyl-ACP substrates to beta-hydroxyacyl-ACP products, the first reductive step in the elongation cycle of fatty acid biosynthesis. This chain is 3-oxoacyl-[acyl-carrier-protein] reductase FabG (fabG), found in Aquifex aeolicus (strain VF5).